We begin with the raw amino-acid sequence, 328 residues long: D-cysteine desulfhydrase (328 aa).

K51 is subject to N6-(pyridoxal phosphate)lysine.

Belongs to the ACC deaminase/D-cysteine desulfhydrase family. In terms of assembly, homodimer. The cofactor is pyridoxal 5'-phosphate.

The enzyme catalyses D-cysteine + H2O = hydrogen sulfide + pyruvate + NH4(+) + H(+). Functionally, catalyzes the alpha,beta-elimination reaction of D-cysteine and of several D-cysteine derivatives. It could be a defense mechanism against D-cysteine. The polypeptide is D-cysteine desulfhydrase (Salmonella paratyphi A (strain AKU_12601)).